The primary structure comprises 211 residues: Guanylate kinase (211 aa).

Residues 5-185 (GLLLILSSPS…AEEQLKMILS (181 aa)) enclose the Guanylate kinase-like domain. 12 to 19 (SPSGAGKS) contributes to the ATP binding site.

This sequence belongs to the guanylate kinase family.

Its subcellular location is the cytoplasm. It catalyses the reaction GMP + ATP = GDP + ADP. Functionally, essential for recycling GMP and indirectly, cGMP. This chain is Guanylate kinase, found in Cereibacter sphaeroides (strain ATCC 17023 / DSM 158 / JCM 6121 / CCUG 31486 / LMG 2827 / NBRC 12203 / NCIMB 8253 / ATH 2.4.1.) (Rhodobacter sphaeroides).